Consider the following 732-residue polypeptide: MDEAESFVPFQGIKKDVKGRLNCYKQDWISGLRAGFRILAPTTYIFFASAIPVITFGEQLERDTDGKITAVQTLVSTALCGVIHSIIGGQPLLILGVAEPTVIMYTFMFNFAKSRTDLGSNLFLAWTGWVCLWTGLLLFLLAVLGACTFINRFTRLAGELFGILIAMLFMQEAIRGIVDEFGVPGRTNPRSAEFQPAWVFANGMFGLVLSSGLLYTGLKSRKARSWRFGAEWLRGFIADYGVPVMVVVWTCISYIPWKSVPQGIPRRLVSPNPWSPGAYQNWTVIKEMVDVPVLYILLAVVPASMIAVLYYFDHSVASQLAQQEDFNLRKPPAYHYDLFLLGFLTILCGLIGIPPSNGVIPQSPMHTKSLATLNHQLLRNKLVAAARKCIRNNATIGEVYGSMEEAYQQMQSPLIHQEPSRIQGLKQSHIQKASNADALVDETVFDIETEVENILPVEVKEQRVSNFLQAMMVAGCVAAMPLIKRIPSSVLWGYFAYMAIESLPGNQFWERIVLLFTAPSRRFKVLEDNHAVFIETVPFKTMAMFTLFQTAYLLVCFGITWVPVAGVLFPLMIMFLVPVRQYVLPNFFKGAHLQDLDAAEYEEAPAILSFNLKPEGEVSRATSFADSGEVMDGMFTRSRGEIRKVSSLKLGGGGSGSTVGSPAGGGVELMRRVVSFQNPRVSEKVYIRSLSDFRGGGEISPRSSAGRAPFSPRSATGGGGGEQRLSNLGKSV.

The residue at position 1 (methionine 1) is an N-acetylmethionine. Over 1 to 37 (MDEAESFVPFQGIKKDVKGRLNCYKQDWISGLRAGFR) the chain is Cytoplasmic. A helical transmembrane segment spans residues 38 to 58 (ILAPTTYIFFASAIPVITFGE). Over 59–77 (QLERDTDGKITAVQTLVST) the chain is Extracellular. A helical membrane pass occupies residues 78–98 (ALCGVIHSIIGGQPLLILGVA). Over 99 to 123 (EPTVIMYTFMFNFAKSRTDLGSNLF) the chain is Cytoplasmic. A helical membrane pass occupies residues 124–144 (LAWTGWVCLWTGLLLFLLAVL). Residues 145–157 (GACTFINRFTRLA) lie on the Extracellular side of the membrane. A helical membrane pass occupies residues 158 to 178 (GELFGILIAMLFMQEAIRGIV). The Cytoplasmic portion of the chain corresponds to 179–197 (DEFGVPGRTNPRSAEFQPA). A helical membrane pass occupies residues 198 to 218 (WVFANGMFGLVLSSGLLYTGL). Residues 219-234 (KSRKARSWRFGAEWLR) are Extracellular-facing. The helical transmembrane segment at 235 to 255 (GFIADYGVPVMVVVWTCISYI) threads the bilayer. Topologically, residues 256-291 (PWKSVPQGIPRRLVSPNPWSPGAYQNWTVIKEMVDV) are cytoplasmic. The helical transmembrane segment at 292–312 (PVLYILLAVVPASMIAVLYYF) threads the bilayer. At 313 to 339 (DHSVASQLAQQEDFNLRKPPAYHYDLF) the chain is on the extracellular side. A helical transmembrane segment spans residues 340–360 (LLGFLTILCGLIGIPPSNGVI). Over 361–463 (PQSPMHTKSL…ILPVEVKEQR (103 aa)) the chain is Cytoplasmic. The helical transmembrane segment at 464–484 (VSNFLQAMMVAGCVAAMPLIK) threads the bilayer. Over 485–556 (RIPSSVLWGY…LFQTAYLLVC (72 aa)) the chain is Extracellular. A helical transmembrane segment spans residues 557–577 (FGITWVPVAGVLFPLMIMFLV). Residues 578 to 732 (PVRQYVLPNF…QRLSNLGKSV (155 aa)) lie on the Cytoplasmic side of the membrane. Residues 695 to 732 (GGGEISPRSSAGRAPFSPRSATGGGGGEQRLSNLGKSV) are disordered.

The protein belongs to the anion exchanger (TC 2.A.31.3) family.

The protein localises to the membrane. Probable boron transporter. Boron is essential for maintaining the integrity of plants cell walls. The protein is Probable boron transporter 3 (BOR3) of Arabidopsis thaliana (Mouse-ear cress).